A 468-amino-acid polypeptide reads, in one-letter code: ATP synthase subunit beta (468 aa).

155–162 (GGAGVGKT) contacts ATP.

It belongs to the ATPase alpha/beta chains family. As to quaternary structure, F-type ATPases have 2 components, CF(1) - the catalytic core - and CF(0) - the membrane proton channel. CF(1) has five subunits: alpha(3), beta(3), gamma(1), delta(1), epsilon(1). CF(0) has three main subunits: a(1), b(2) and c(9-12). The alpha and beta chains form an alternating ring which encloses part of the gamma chain. CF(1) is attached to CF(0) by a central stalk formed by the gamma and epsilon chains, while a peripheral stalk is formed by the delta and b chains.

Its subcellular location is the cell membrane. It catalyses the reaction ATP + H2O + 4 H(+)(in) = ADP + phosphate + 5 H(+)(out). In terms of biological role, produces ATP from ADP in the presence of a proton gradient across the membrane. The catalytic sites are hosted primarily by the beta subunits. In Streptococcus uberis (strain ATCC BAA-854 / 0140J), this protein is ATP synthase subunit beta.